The chain runs to 361 residues: Peptide chain release factor 1 (361 aa).

Glutamine 237 carries the N5-methylglutamine modification. The disordered stretch occupies residues 285 to 306; sequence QAEQSAQQTEQRRQLVGSGDRS.

Belongs to the prokaryotic/mitochondrial release factor family. Post-translationally, methylated by PrmC. Methylation increases the termination efficiency of RF1.

It is found in the cytoplasm. Functionally, peptide chain release factor 1 directs the termination of translation in response to the peptide chain termination codons UAG and UAA. In Alkalilimnicola ehrlichii (strain ATCC BAA-1101 / DSM 17681 / MLHE-1), this protein is Peptide chain release factor 1.